A 189-amino-acid polypeptide reads, in one-letter code: Segregation and condensation protein B (189 aa).

Belongs to the ScpB family. Homodimer. Homodimerization may be required to stabilize the binding of ScpA to the Smc head domains. Component of a cohesin-like complex composed of ScpA, ScpB and the Smc homodimer, in which ScpA and ScpB bind to the head domain of Smc. The presence of the three proteins is required for the association of the complex with DNA.

It localises to the cytoplasm. Functionally, participates in chromosomal partition during cell division. May act via the formation of a condensin-like complex containing Smc and ScpA that pull DNA away from mid-cell into both cell halves. The sequence is that of Segregation and condensation protein B from Streptococcus mitis.